The sequence spans 210 residues: GEM-like protein 7 (210 aa).

Positions 88-166 (KIYKRLFKVC…CKINGVNQSQ (79 aa)) constitute a GRAM domain.

This sequence belongs to the GEM family.

This chain is GEM-like protein 7, found in Arabidopsis thaliana (Mouse-ear cress).